The sequence spans 369 residues: DNA replication and repair protein RecF (369 aa).

G30–T37 serves as a coordination point for ATP.

Belongs to the RecF family.

The protein resides in the cytoplasm. The RecF protein is involved in DNA metabolism; it is required for DNA replication and normal SOS inducibility. RecF binds preferentially to single-stranded, linear DNA. It also seems to bind ATP. This is DNA replication and repair protein RecF from Streptococcus equi subsp. zooepidemicus (strain MGCS10565).